A 358-amino-acid chain; its full sequence is Histidinol-phosphate aminotransferase (358 aa).

K218 bears the N6-(pyridoxal phosphate)lysine mark.

Belongs to the class-II pyridoxal-phosphate-dependent aminotransferase family. Histidinol-phosphate aminotransferase subfamily. Homodimer. Pyridoxal 5'-phosphate is required as a cofactor.

It carries out the reaction L-histidinol phosphate + 2-oxoglutarate = 3-(imidazol-4-yl)-2-oxopropyl phosphate + L-glutamate. It functions in the pathway amino-acid biosynthesis; L-histidine biosynthesis; L-histidine from 5-phospho-alpha-D-ribose 1-diphosphate: step 7/9. This chain is Histidinol-phosphate aminotransferase, found in Dehalococcoides mccartyi (strain ATCC BAA-2100 / JCM 16839 / KCTC 5957 / BAV1).